The following is a 101-amino-acid chain: Protein RnfH (101 aa).

It belongs to the UPF0125 (RnfH) family.

The chain is Protein RnfH from Coxiella burnetii (strain CbuG_Q212) (Coxiella burnetii (strain Q212)).